A 197-amino-acid chain; its full sequence is Peptidoglycan-recognition protein 1 (197 aa).

The first 23 residues, 1-23 (MKLATITFFLLTEIFFYISYAEA), serve as a signal peptide directing secretion. Intrachain disulfides connect cysteine 31–cysteine 154 and cysteine 68–cysteine 74. The N-acetylmuramoyl-L-alanine amidase domain occupies 53–180 (KPLERVVIHH…RNVKATKSPG (128 aa)).

This sequence belongs to the N-acetylmuramoyl-L-alanine amidase 2 family. As to expression, localizes to plasma (at protein level).

It is found in the secreted. Its function is as follows. Peptidoglycan-recognition protein probably involved in innate immunity by binding to peptidoglycans (PGN) of bacteria and activating the prophenoloxidase (proPO) cascade immune response. Binds to 1,3-beta-D-glucan and PGN. The sequence is that of Peptidoglycan-recognition protein 1 (PGRP-1) from Holotrichia diomphalia (Korean black chafer).